A 251-amino-acid polypeptide reads, in one-letter code: uncharacterized protein (251 aa).

This sequence to M.jannaschii MJ0638 and MJ1123 and M.tuberculosis Rv2003c.

This is an uncharacterized protein from Methanocaldococcus jannaschii (strain ATCC 43067 / DSM 2661 / JAL-1 / JCM 10045 / NBRC 100440) (Methanococcus jannaschii).